The following is a 448-amino-acid chain: UDP-N-acetylmuramoylalanine--D-glutamate ligase (448 aa).

112 to 118 (GSNAKST) serves as a coordination point for ATP.

It belongs to the MurCDEF family.

It localises to the cytoplasm. The enzyme catalyses UDP-N-acetyl-alpha-D-muramoyl-L-alanine + D-glutamate + ATP = UDP-N-acetyl-alpha-D-muramoyl-L-alanyl-D-glutamate + ADP + phosphate + H(+). Its pathway is cell wall biogenesis; peptidoglycan biosynthesis. In terms of biological role, cell wall formation. Catalyzes the addition of glutamate to the nucleotide precursor UDP-N-acetylmuramoyl-L-alanine (UMA). In Acinetobacter baumannii (strain ATCC 17978 / DSM 105126 / CIP 53.77 / LMG 1025 / NCDC KC755 / 5377), this protein is UDP-N-acetylmuramoylalanine--D-glutamate ligase.